The chain runs to 448 residues: Bud neck protein 5 (448 aa).

3 disordered regions span residues 63–103 (SGND…DPSQ), 171–211 (DDEW…TLGG), and 242–352 (GDNE…SSPI). Ser-70 and Ser-179 each carry phosphoserine. The segment covering 171–180 (DDEWEDEKSD) has biased composition (acidic residues). Positions 181-191 (VEEGRVDKGTE) are enriched in basic and acidic residues. Position 194 is a phosphoserine (Ser-194). The segment covering 245 to 262 (EYNHESSRLADQTPHDDN) has biased composition (basic and acidic residues). Thr-257 is modified (phosphothreonine). Positions 264 to 281 (ENCPNRSGGSTPLDSQTK) are enriched in polar residues. Phosphoserine occurs at positions 270 and 273. A Phosphothreonine modification is found at Thr-274. The segment covering 325–343 (SVSSNSNSRNGSRKSSLNK) has biased composition (low complexity). A phosphoserine mark is found at Ser-332 and Ser-340. Position 344 is a phosphotyrosine (Tyr-344). Ser-346 and Ser-350 each carry phosphoserine.

Component of the GIN4 complex composed of at least BNI5, CDC3, CDC10, CDC11, CDC12, GIN4, NAP1 and SHS1. Interacts directly with CDC11, CDC12 and SHS1.

The protein resides in the cytoplasm. The protein localises to the bud neck. Functionally, required for normal septin function and cytokinesis. Its recruitment to the bud neck by CDCd11 and SHS1 ensures efficient localization at the bud neck of MYO1, the type II myosin of the actomyosin contractile ring. This Saccharomyces cerevisiae (strain ATCC 204508 / S288c) (Baker's yeast) protein is Bud neck protein 5.